A 120-amino-acid chain; its full sequence is Urease subunit beta (120 aa).

Belongs to the urease beta subunit family. Heterotrimer of UreA (gamma), UreB (beta) and UreC (alpha) subunits. Three heterotrimers associate to form the active enzyme.

Its subcellular location is the cytoplasm. It carries out the reaction urea + 2 H2O + H(+) = hydrogencarbonate + 2 NH4(+). It participates in nitrogen metabolism; urea degradation; CO(2) and NH(3) from urea (urease route): step 1/1. This is Urease subunit beta from Corynebacterium efficiens (strain DSM 44549 / YS-314 / AJ 12310 / JCM 11189 / NBRC 100395).